Here is a 327-residue protein sequence, read N- to C-terminus: L-lactate dehydrogenase (327 aa).

Residues valine 18, aspartate 39, lysine 44, tyrosine 69, and 83–84 each bind NAD(+); that span reads GA. Substrate-binding positions include glutamine 86, arginine 92, and 124–127; that span reads NPVD. NAD(+)-binding positions include 122–124 and serine 147; that span reads AAN. 152 to 155 contributes to the substrate binding site; it reads DSAR. Residues arginine 157 and histidine 172 each coordinate beta-D-fructose 1,6-bisphosphate. Histidine 179 acts as the Proton acceptor in catalysis. Residue tyrosine 224 is modified to Phosphotyrosine. Residue threonine 233 participates in substrate binding.

The protein belongs to the LDH/MDH superfamily. LDH family. In terms of assembly, homotetramer.

The protein localises to the cytoplasm. It catalyses the reaction (S)-lactate + NAD(+) = pyruvate + NADH + H(+). It participates in fermentation; pyruvate fermentation to lactate; (S)-lactate from pyruvate: step 1/1. Allosterically activated by fructose 1,6-bisphosphate (FBP). Functionally, catalyzes the conversion of lactate to pyruvate. The chain is L-lactate dehydrogenase from Streptococcus equi subsp. zooepidemicus (strain H70).